The chain runs to 530 residues: Tyrosinase (530 aa).

The signal sequence occupies residues 1–17; sequence MLLAALYCLLWSFRTSA. Over 19–473 the chain is Lumenal, melanosome; sequence HFPRACASSK…IKPYLEQAQR (455 aa). N-linked (GlcNAc...) asparagine glycosylation is present at N86. Cu cation contacts are provided by H180, H202, and H211. 3 N-linked (GlcNAc...) asparagine glycosylation sites follow: N230, N290, and N337. Cu cation is bound by residues H363 and H367. N-linked (GlcNAc...) asparagine glycosylation occurs at N371. H390 is a Cu cation binding site. The helical transmembrane segment at 474-494 threads the bilayer; it reads IWPWLIGAAVVGSVLTAVLGG. Topologically, residues 495 to 530 are cytoplasmic; the sequence is LTSLLCRRKRNQLPEEKQPLLMEKEDYHNLMYQSHL.

Belongs to the tyrosinase family. As to quaternary structure, forms an OPN3-dependent complex with DCT in response to blue light in melanocytes. Cu(2+) serves as cofactor. Post-translationally, glycosylated.

Its subcellular location is the melanosome membrane. The protein resides in the melanosome. It catalyses the reaction 2 L-dopa + O2 = 2 L-dopaquinone + 2 H2O. The catalysed reaction is L-tyrosine + O2 = L-dopaquinone + H2O. The enzyme catalyses 2 5,6-dihydroxyindole-2-carboxylate + O2 = 2 indole-5,6-quinone-2-carboxylate + 2 H2O. In terms of biological role, this is a copper-containing oxidase that functions in the formation of pigments such as melanins and other polyphenolic compounds. Catalyzes the initial and rate limiting step in the cascade of reactions leading to melanin production from tyrosine. In addition to hydroxylating tyrosine to DOPA (3,4-dihydroxyphenylalanine), also catalyzes the oxidation of DOPA to DOPA-quinone, and possibly the oxidation of DHI (5,6-dihydroxyindole) to indole-5,6 quinone. This Bos taurus (Bovine) protein is Tyrosinase (TYR).